We begin with the raw amino-acid sequence, 221 residues long: 3-isopropylmalate dehydratase small subunit (221 aa).

The protein belongs to the LeuD family. LeuD type 1 subfamily. As to quaternary structure, heterodimer of LeuC and LeuD.

The catalysed reaction is (2R,3S)-3-isopropylmalate = (2S)-2-isopropylmalate. It functions in the pathway amino-acid biosynthesis; L-leucine biosynthesis; L-leucine from 3-methyl-2-oxobutanoate: step 2/4. Functionally, catalyzes the isomerization between 2-isopropylmalate and 3-isopropylmalate, via the formation of 2-isopropylmaleate. This is 3-isopropylmalate dehydratase small subunit from Nitrosomonas europaea (strain ATCC 19718 / CIP 103999 / KCTC 2705 / NBRC 14298).